Reading from the N-terminus, the 921-residue chain is Ubiquitin carboxyl-terminal hydrolase 11 (921 aa).

Positions 1-16 are enriched in low complexity; the sequence is MAAVAADPAAAAVPAS. The tract at residues 1-29 is disordered; the sequence is MAAVAADPAAAAVPASAEDRETQPEAMPD. In terms of domain architecture, DUSP spans 28–133; that stretch reads PDLDQQWRQI…DQPPIERKVI (106 aa). Lys194 carries the post-translational modification N6-acetyllysine. A USP domain is found at 257–889; it reads CGLTNLGNTC…AAYVLFYQRQ (633 aa). Cys266 acts as the Nucleophile in catalysis. The segment at 592–697 is disordered; sequence TKPTSDDDDG…DRTTSPEEAQ (106 aa). A Phosphoserine modification is found at Ser596. Positions 597–624 are enriched in acidic residues; the sequence is DDDDGDEKGDENEDEDVEDDSSSEEEKE. Composition is skewed to polar residues over residues 657–666 and 676–697; these read LDNSLHTSQW and FTLQTVNSNGTSDRTTSPEEAQ. Ser692 carries the phosphoserine modification. His847 acts as the Proton acceptor in catalysis. Residues 893-921 form a disordered region; that stretch reads RRQSQTASSETPTSPASSSTPNSDIMDVN. Low complexity predominate over residues 895–915; the sequence is QSQTASSETPTSPASSSTPNS. At Ser906 the chain carries Phosphoserine.

This sequence belongs to the peptidase C19 family. Monomer. Associated component of the Polycomb group (PcG) multiprotein PRC1-like complex. Interacts with RANBP9/RANBPM. Interacts with BRCA2. Interacts with CHUK/IKKA. Interacts with NFKBIA. Interacts with SPRY3, RAE1, MYCBP2/PAM, and KCTD6.

Its subcellular location is the nucleus. The protein resides in the cytoplasm. It is found in the chromosome. It catalyses the reaction Thiol-dependent hydrolysis of ester, thioester, amide, peptide and isopeptide bonds formed by the C-terminal Gly of ubiquitin (a 76-residue protein attached to proteins as an intracellular targeting signal).. In terms of biological role, protease that can remove conjugated ubiquitin from target proteins and polyubiquitin chains. Inhibits the degradation of target proteins by the proteasome. Cleaves preferentially 'Lys-6' and 'Lys-63'-linked ubiquitin chains. Has lower activity with 'Lys-11' and 'Lys-33'-linked ubiquitin chains, and extremely low activity with 'Lys-27', 'Lys-29' and 'Lys-48'-linked ubiquitin chains (in vitro). Plays a role in the regulation of pathways leading to NF-kappa-B activation. Plays a role in the regulation of DNA repair after double-stranded DNA breaks. Acts as a chromatin regulator via its association with the Polycomb group (PcG) multiprotein PRC1-like complex; may act by deubiquitinating components of the PRC1-like comple. Promotes cell proliferation by deubiquitinating phosphorylated E2F1x. The sequence is that of Ubiquitin carboxyl-terminal hydrolase 11 from Rattus norvegicus (Rat).